A 367-amino-acid chain; its full sequence is Cell division protein FtsZ (367 aa).

GTP contacts are provided by residues 17-21 (GGGSN), 104-106 (GTG), Glu135, Lys139, and Asp183.

Belongs to the FtsZ family. In terms of assembly, homodimer. Polymerizes to form a dynamic ring structure in a strictly GTP-dependent manner. Interacts directly with several other division proteins.

It is found in the cytoplasm. Functionally, essential cell division protein that forms a contractile ring structure (Z ring) at the future cell division site. The regulation of the ring assembly controls the timing and the location of cell division. One of the functions of the FtsZ ring is to recruit other cell division proteins to the septum to produce a new cell wall between the dividing cells. Binds GTP and shows GTPase activity. The protein is Cell division protein FtsZ of Aquifex aeolicus (strain VF5).